Reading from the N-terminus, the 208-residue chain is Protein-L-isoaspartate O-methyltransferase (208 aa).

Residue Ser-59 is part of the active site.

It belongs to the methyltransferase superfamily. L-isoaspartyl/D-aspartyl protein methyltransferase family.

It localises to the cytoplasm. It carries out the reaction [protein]-L-isoaspartate + S-adenosyl-L-methionine = [protein]-L-isoaspartate alpha-methyl ester + S-adenosyl-L-homocysteine. In terms of biological role, catalyzes the methyl esterification of L-isoaspartyl residues in peptides and proteins that result from spontaneous decomposition of normal L-aspartyl and L-asparaginyl residues. It plays a role in the repair and/or degradation of damaged proteins. The chain is Protein-L-isoaspartate O-methyltransferase from Salmonella newport (strain SL254).